We begin with the raw amino-acid sequence, 993 residues long: Ephrin type-A receptor 7 (993 aa).

Residues 1–27 (MVLRSRLPPWIMLCSVWLLRFAHTGEA) form the signal peptide. Residues 28–550 (QAAKEVILLD…TAVSSEQNPV (523 aa)) are Extracellular-facing. Residues 32–210 (EVILLDSKAQ…YYKKCWSIIE (179 aa)) enclose the Eph LBD domain. 2 Fibronectin type-III domains span residues 331 to 441 (PPSA…TGQA) and 442 to 537 (APSQ…TLEE). N-linked (GlcNAc...) asparagine glycosylation is found at N343 and N410. Residues 551–571 (IIIAVVAVAGTIILVFMVFGF) form a helical membrane-spanning segment. At 572–993 (IIGRRHCGYS…LHLHGTGIQV (422 aa)) the chain is on the cytoplasmic side. A phosphotyrosine; by autocatalysis mark is found at Y603 and Y609. Residues 628-889 (IKIERVIGAG…QIVGILDKMI (262 aa)) form the Protein kinase domain. ATP contacts are provided by residues 634–642 (IGAGEFGEV) and K660. Catalysis depends on D753, which acts as the Proton acceptor. Residues Y786 and Y935 each carry the phosphotyrosine; by autocatalysis modification. The 65-residue stretch at 918 to 982 (TTFCSVGEWL…MSSIQTMRAQ (65 aa)) folds into the SAM domain. Residues 991-993 (IQV) carry the PDZ-binding motif.

Belongs to the protein kinase superfamily. Tyr protein kinase family. Ephrin receptor subfamily. Heterotetramer upon binding of the ligand. The heterotetramer is composed of an ephrin dimer and a receptor dimer. Oligomerization is probably required to induce biological responses. Phosphorylated.

Its subcellular location is the cell membrane. The enzyme catalyses L-tyrosyl-[protein] + ATP = O-phospho-L-tyrosyl-[protein] + ADP + H(+). Receptor tyrosine kinase which binds promiscuously GPI-anchored ephrin-A family ligands residing on adjacent cells, leading to contact-dependent bidirectional signaling into neighboring cells. The signaling pathway downstream of the receptor is referred to as forward signaling while the signaling pathway downstream of the ephrin ligand is referred to as reverse signaling. Among GPI-anchored ephrin-A ligands, EFNA5 is a cognate/functional ligand for EPHA7 and their interaction regulates brain development modulating cell-cell adhesion and repulsion. Has a repellent activity on axons and is for instance involved in the guidance of corticothalamic axons and in the proper topographic mapping of retinal axons to the colliculus. May also regulate brain development through a caspase(CASP3)-dependent proapoptotic activity. Forward signaling may result in activation of components of the ERK signaling pathway including MAP2K1, MAP2K2, MAPK1 and MAPK3 which are phosphorylated upon activation of EPHA7. This Gallus gallus (Chicken) protein is Ephrin type-A receptor 7 (EPHA7).